Reading from the N-terminus, the 497-residue chain is Ganglioside-induced differentiation-associated protein 2 (497 aa).

The Macro domain maps to 43 to 223 (RSPFLYNKDI…TYQKLLPLYF (181 aa)). The tract at residues 251–273 (PERQIRISEKPGAPEDNQEEEDE) is disordered. Over residues 253 to 263 (RQIRISEKPGA) the composition is skewed to basic and acidic residues. At S280 the chain carries Phosphoserine. One can recognise a CRAL-TRIO domain in the interval 333–481 (DIASLKALYQ…FPPFVLEYDA (149 aa)).

This sequence belongs to the GDAP2 family.

This is Ganglioside-induced differentiation-associated protein 2 (GDAP2) from Bos taurus (Bovine).